Consider the following 385-residue polypeptide: 8-amino-7-oxononanoate synthase (385 aa).

A substrate-binding site is contributed by R21. 108-109 (GF) is a binding site for pyridoxal 5'-phosphate. H133 is a binding site for substrate. Residues S179, H207, and T233 each coordinate pyridoxal 5'-phosphate. Residue K236 is modified to N6-(pyridoxal phosphate)lysine. T352 is a binding site for substrate.

The protein belongs to the class-II pyridoxal-phosphate-dependent aminotransferase family. BioF subfamily. In terms of assembly, homodimer. Pyridoxal 5'-phosphate serves as cofactor.

It carries out the reaction 6-carboxyhexanoyl-[ACP] + L-alanine + H(+) = (8S)-8-amino-7-oxononanoate + holo-[ACP] + CO2. It functions in the pathway cofactor biosynthesis; biotin biosynthesis. In terms of biological role, catalyzes the decarboxylative condensation of pimeloyl-[acyl-carrier protein] and L-alanine to produce 8-amino-7-oxononanoate (AON), [acyl-carrier protein], and carbon dioxide. The chain is 8-amino-7-oxononanoate synthase from Klebsiella pneumoniae subsp. pneumoniae (strain ATCC 700721 / MGH 78578).